We begin with the raw amino-acid sequence, 828 residues long: Outer membrane usher protein MrkC (828 aa).

The signal sequence occupies residues 1-18 (MKQRSICPGRLSTAIAVA). A disulfide bridge connects residues Cys-813 and Cys-827.

The protein belongs to the fimbrial export usher family.

Its subcellular location is the cell outer membrane. Its function is as follows. Involved in the export and assembly of the type 3 fimbrial subunit (MrkA). The protein is Outer membrane usher protein MrkC (mrkC) of Klebsiella pneumoniae.